The chain runs to 395 residues: Synaptotagmin-8 (395 aa).

At 1 to 44 (MQADRSMKMGHVSNPLSTSAPVDATAGPNLIPDLITKIPWPRWI) the chain is on the extracellular side. The helical; Signal-anchor for type III membrane protein transmembrane segment at 45 to 65 (LFIAILAAGVLLVSCLLCVIC) threads the bilayer. At 66 to 395 (YCCHRQRHRK…PRLPLLRPRS (330 aa)) the chain is on the cytoplasmic side. C2 domains lie at 113 to 229 (PWGQ…ESWY) and 241 to 370 (QMGE…AQWH).

This sequence belongs to the synaptotagmin family. Homodimer or homooligomer. Homodimerization and homooligomerization do not depend on Ca(2+). Interacts with SYNCRIP isoform 2 C-terminus. Binds inositol 1,3,4,5-tetrakisphosphate (IP4). Binds to AP2 in a Ca(2+)-independent manner. Interacts with STX1A, STX1B and STX2; the interaction is Ca(2+)-dependent. Ubiquitous. Strongly expressed in heart, kidney, cerebral cortex, pancreas, and many insulin-secreting cells; lower expression in spleen. Broadly distributed in kidney.

It localises to the cell membrane. The protein localises to the cytoplasmic vesicle. The protein resides in the secretory vesicle. It is found in the acrosome. In terms of biological role, involved in the trafficking and exocytosis of secretory vesicles in non-neuronal tissues. Mediates Ca(2+)-regulation of exocytosis acrosomal reaction in sperm. May mediate Ca(2+)-regulation of exocytosis in insulin secreted cells. This Rattus norvegicus (Rat) protein is Synaptotagmin-8 (Syt8).